The sequence spans 98 residues: Small ribosomal subunit protein bS6 (98 aa).

This sequence belongs to the bacterial ribosomal protein bS6 family.

Functionally, binds together with bS18 to 16S ribosomal RNA. This chain is Small ribosomal subunit protein bS6, found in Moorella thermoacetica (strain ATCC 39073 / JCM 9320).